Consider the following 450-residue polypeptide: NADH-quinone oxidoreductase subunit H (450 aa).

9 helical membrane-spanning segments follow: residues 18-38 (WWLV…TPLL), 91-111 (ILAP…IPFG), 128-148 (LPVA…GIVL), 169-189 (VISY…DAGT), 201-221 (HTWY…SMVG), 262-282 (VTVS…PFPL), 292-312 (WWPV…FVWL), 324-344 (FMGL…MIVA), and 358-378 (SIAL…LLWK). The segment at 387–450 (APEKPVEPRG…TGPTQENSDD (64 aa)) is disordered. The span at 390–400 (KPVEPRGRAEL) shows a compositional bias: basic and acidic residues. The segment covering 433-450 (VSVTGAHSTGPTQENSDD) has biased composition (polar residues).

This sequence belongs to the complex I subunit 1 family. NDH-1 is composed of 14 different subunits. Subunits NuoA, H, J, K, L, M, N constitute the membrane sector of the complex.

The protein localises to the cell membrane. It carries out the reaction a quinone + NADH + 5 H(+)(in) = a quinol + NAD(+) + 4 H(+)(out). Its function is as follows. NDH-1 shuttles electrons from NADH, via FMN and iron-sulfur (Fe-S) centers, to quinones in the respiratory chain. The immediate electron acceptor for the enzyme in this species is believed to be ubiquinone. Couples the redox reaction to proton translocation (for every two electrons transferred, four hydrogen ions are translocated across the cytoplasmic membrane), and thus conserves the redox energy in a proton gradient. This subunit may bind ubiquinone. In Rhodococcus jostii (strain RHA1), this protein is NADH-quinone oxidoreductase subunit H.